The primary structure comprises 224 residues: MTINHFALNAVDRSAELQGKGASRRLRKQNLVPAIIYGGGEQPTAISIKINELVKSLEFEAFFSHILTLNVDGEEHQVVIKDLQRHPAKGFPMHADFQRVVKGQKINMNVPVHFSGREEAPGTKAGGVLSTLVTDIEIVCIPSQLPEYLEIDVSGMEIGDLFRLSDITLPEGVVIAELELEDGHDRTIVNMQPPTVEEVDEAAEVDAADVPATEQGTDESKDGE.

Positions 195 to 224 (TVEEVDEAAEVDAADVPATEQGTDESKDGE) are disordered. Acidic residues predominate over residues 197–207 (EEVDEAAEVDA).

This sequence belongs to the bacterial ribosomal protein bL25 family. CTC subfamily. Part of the 50S ribosomal subunit; part of the 5S rRNA/L5/L18/L25 subcomplex. Contacts the 5S rRNA. Binds to the 5S rRNA independently of L5 and L18.

In terms of biological role, this is one of the proteins that binds to the 5S RNA in the ribosome where it forms part of the central protuberance. This is Large ribosomal subunit protein bL25 from Psychrobacter cryohalolentis (strain ATCC BAA-1226 / DSM 17306 / VKM B-2378 / K5).